A 217-amino-acid polypeptide reads, in one-letter code: Protein dao-4 (217 aa).

The first 21 residues, 1 to 21, serve as a signal peptide directing secretion; it reads MKIALYSILLITVCYLSSTDA.

The protein resides in the nucleus. Its subcellular location is the secreted. In terms of biological role, probably acts downstream of the Wnt signaling pathway. In Caenorhabditis elegans, this protein is Protein dao-4.